The primary structure comprises 297 residues: Bifunctional protein FolD 1 (297 aa).

NADP(+) contacts are provided by residues 164–166 (GRS), serine 193, and isoleucine 234.

It belongs to the tetrahydrofolate dehydrogenase/cyclohydrolase family. As to quaternary structure, homodimer.

The catalysed reaction is (6R)-5,10-methylene-5,6,7,8-tetrahydrofolate + NADP(+) = (6R)-5,10-methenyltetrahydrofolate + NADPH. It catalyses the reaction (6R)-5,10-methenyltetrahydrofolate + H2O = (6R)-10-formyltetrahydrofolate + H(+). Its pathway is one-carbon metabolism; tetrahydrofolate interconversion. Catalyzes the oxidation of 5,10-methylenetetrahydrofolate to 5,10-methenyltetrahydrofolate and then the hydrolysis of 5,10-methenyltetrahydrofolate to 10-formyltetrahydrofolate. The polypeptide is Bifunctional protein FolD 1 (Haloarcula marismortui (strain ATCC 43049 / DSM 3752 / JCM 8966 / VKM B-1809) (Halobacterium marismortui)).